Reading from the N-terminus, the 66-residue chain is Large ribosomal subunit protein bL35 (66 aa).

It belongs to the bacterial ribosomal protein bL35 family.

In Lysinibacillus sphaericus (strain C3-41), this protein is Large ribosomal subunit protein bL35.